The following is a 365-amino-acid chain: 3-isopropylmalate dehydrogenase (365 aa).

78 to 91 (GPKWDTLPAEERPE) is a binding site for NAD(+). Positions 99, 109, 138, and 227 each coordinate substrate. Residues Asp-227, Asp-251, and Asp-255 each coordinate Mg(2+). Residue 285 to 297 (GSAPDIAGKNIAN) participates in NAD(+) binding.

The protein belongs to the isocitrate and isopropylmalate dehydrogenases family. LeuB type 1 subfamily. In terms of assembly, homodimer. Mg(2+) serves as cofactor. Mn(2+) is required as a cofactor.

The protein localises to the cytoplasm. The catalysed reaction is (2R,3S)-3-isopropylmalate + NAD(+) = 4-methyl-2-oxopentanoate + CO2 + NADH. It participates in amino-acid biosynthesis; L-leucine biosynthesis; L-leucine from 3-methyl-2-oxobutanoate: step 3/4. Catalyzes the oxidation of 3-carboxy-2-hydroxy-4-methylpentanoate (3-isopropylmalate) to 3-carboxy-4-methyl-2-oxopentanoate. The product decarboxylates to 4-methyl-2 oxopentanoate. This chain is 3-isopropylmalate dehydrogenase, found in Syntrophotalea carbinolica (strain DSM 2380 / NBRC 103641 / GraBd1) (Pelobacter carbinolicus).